The chain runs to 485 residues: Pup--protein ligase (485 aa).

Position 33 (glutamate 33) interacts with Mg(2+). Arginine 76 is a binding site for ATP. Tyrosine 78 lines the Mg(2+) pocket. Aspartate 80 (proton acceptor) is an active-site residue. A Mg(2+)-binding site is contributed by glutamate 86. Threonine 89 and tryptophan 451 together coordinate ATP.

This sequence belongs to the Pup ligase/Pup deamidase family. Pup-conjugating enzyme subfamily.

It carries out the reaction ATP + [prokaryotic ubiquitin-like protein]-L-glutamate + [protein]-L-lysine = ADP + phosphate + N(6)-([prokaryotic ubiquitin-like protein]-gamma-L-glutamyl)-[protein]-L-lysine.. Its pathway is protein degradation; proteasomal Pup-dependent pathway. The protein operates within protein modification; protein pupylation. Catalyzes the covalent attachment of the prokaryotic ubiquitin-like protein modifier Pup to the proteasomal substrate proteins, thereby targeting them for proteasomal degradation. This tagging system is termed pupylation. The ligation reaction involves the side-chain carboxylate of the C-terminal glutamate of Pup and the side-chain amino group of a substrate lysine. The protein is Pup--protein ligase of Bifidobacterium longum subsp. infantis (strain ATCC 15697 / DSM 20088 / JCM 1222 / NCTC 11817 / S12).